A 541-amino-acid polypeptide reads, in one-letter code: Eukaryotic translation initiation factor 3 subunit L (541 aa).

In terms of domain architecture, PCI spans 308 to 516; that stretch reads TFSDILLYIQ…IHIADTKVSH (209 aa).

This sequence belongs to the eIF-3 subunit L family. Component of the eukaryotic translation initiation factor 3 (eIF-3) complex. The eIF-3 complex interacts with pix.

Its subcellular location is the cytoplasm. Functionally, component of the eukaryotic translation initiation factor 3 (eIF-3) complex, which is involved in protein synthesis of a specialized repertoire of mRNAs and, together with other initiation factors, stimulates binding of mRNA and methionyl-tRNAi to the 40S ribosome. The eIF-3 complex specifically targets and initiates translation of a subset of mRNAs involved in cell proliferation. This chain is Eukaryotic translation initiation factor 3 subunit L, found in Drosophila pseudoobscura pseudoobscura (Fruit fly).